Here is a 94-residue protein sequence, read N- to C-terminus: Large ribosomal subunit protein uL23cz (94 aa).

This sequence belongs to the universal ribosomal protein uL23 family. In terms of assembly, part of the 50S ribosomal subunit.

The protein localises to the plastid. It localises to the chloroplast. Binds to 23S rRNA. This is Large ribosomal subunit protein uL23cz (rpl23-A) from Agrostis stolonifera (Creeping bentgrass).